Reading from the N-terminus, the 148-residue chain is Putative fusion protein (148 aa).

Residues 1–34 (MDRALSTFPGDDDETNERNINHREKTSGEHGHYE) form a disordered region. Positions 16-34 (NERNINHREKTSGEHGHYE) are enriched in basic and acidic residues.

Belongs to the poxviruses fusion protein family. In terms of assembly, homotrimer, covalently linked.

It localises to the virion membrane. The polypeptide is Putative fusion protein (Sheeppox virus (strain KS-1) (SPPV)).